A 182-amino-acid chain; its full sequence is Putative manganese efflux pump MntP 1 (182 aa).

A run of 6 helical transmembrane segments spans residues 4 to 24 (LLLLSLALSMDAFAVSLGLGA), 42 to 62 (IFQGIMPLLGFFVGVTFIAFI), 63 to 83 (SAFDHYLAFGILALIGAKMIY), 103 to 123 (LILSIATSIDALAAGVSLHLI), 127 to 147 (VFLSCTIIAFTTFLLSYLGVL), and 162 to 182 (ILGGVILIGIGSKILLEHLFF).

The protein belongs to the MntP (TC 9.B.29) family.

It is found in the cell inner membrane. In terms of biological role, probably functions as a manganese efflux pump. This is Putative manganese efflux pump MntP 1 from Wolinella succinogenes (strain ATCC 29543 / DSM 1740 / CCUG 13145 / JCM 31913 / LMG 7466 / NCTC 11488 / FDC 602W) (Vibrio succinogenes).